A 396-amino-acid polypeptide reads, in one-letter code: Cathepsin E (396 aa).

Positions 1–19 (MKTLPLLLLLLLDLGQAQG) are cleaved as a signal peptide. A propeptide spans 20–53 (TLDRVPLRRQPSLRKKLRAQGQLSEFWKAHKVDM) (activation peptide). The Peptidase A1 domain occupies 78–392 (YFGTISIGSP…DRGSNRVGLA (315 aa)). N-linked (GlcNAc...) asparagine glycosylation is present at Asn-90. Asp-96 is a catalytic residue. Cystine bridges form between Cys-109–Cys-114 and Cys-272–Cys-276. Asp-281 is a catalytic residue. A disulfide bridge connects residues Cys-314 and Cys-351.

It belongs to the peptidase A1 family. Homodimer; disulfide-linked. Glycosylated. The nature of the carbohydrate chain varies between cell types.

The protein localises to the endosome. The catalysed reaction is Similar to cathepsin D, but slightly broader specificity.. May have a role in immune function. Probably involved in the processing of antigenic peptides during MHC class II-mediated antigen presentation. May play a role in activation-induced lymphocyte depletion in the thymus, and in neuronal degeneration and glial cell activation in the brain. The protein is Cathepsin E (CTSE) of Oryctolagus cuniculus (Rabbit).